Reading from the N-terminus, the 143-residue chain is Small ribosomal subunit protein uS12 (143 aa).

The segment covering 1 to 19 (MGKPKGIRAARKLKTHRQA) has biased composition (basic residues). A disordered region spans residues 1–21 (MGKPKGIRAARKLKTHRQAQR). P62 is subject to Hydroxyproline.

The protein belongs to the universal ribosomal protein uS12 family. Component of the 40S small ribosomal subunit.

The protein resides in the cytoplasm. The protein localises to the cytosol. It localises to the rough endoplasmic reticulum. The protein is Small ribosomal subunit protein uS12 (rps-23) of Brugia malayi (Filarial nematode worm).